A 571-amino-acid polypeptide reads, in one-letter code: Ferroportin (571 aa).

At 1–23 the chain is on the cytoplasmic side; the sequence is MTRAGDHNRQRGCCGSLADYLTS. Residues 24 to 53 traverse the membrane as a helical segment; that stretch reads AKFLLYLGHSLSTWGDRMWHFAVSVFLVEL. The Fe cation site is built by Asp-39 and His-43. At 54–57 the chain is on the extracellular side; sequence YGNS. A helical transmembrane segment spans residues 58 to 84; sequence LLLTAVYGLVVAGSVLVLGAIIGDWVD. Residues 85–87 are Cytoplasmic-facing; that stretch reads KNA. A helical transmembrane segment spans residues 88 to 118; the sequence is RLKVAQTSLVVQNVSVILCGIILMMVFLHKH. The Extracellular segment spans residues 119–126; that stretch reads ELLTMYHG. The helical transmembrane segment at 127-162 threads the bilayer; that stretch reads WVLTSCYILIITIANIANLASTATAITIQRDWIVVV. Over 163–164 the chain is Cytoplasmic; it reads AG. The chain crosses the membrane as a helical span at residues 165 to 195; it reads EDRSKLANMNATIRRIDQLTNILAPMAVGQI. At 196–202 the chain is on the extracellular side; the sequence is MTFGSPV. A helical transmembrane segment spans residues 203 to 229; the sequence is IGCGFISGWNLVSMCVEYVLLWKVYQK. The Cytoplasmic segment spans residues 230-306; that stretch reads TPALAVKAGL…DGWVSYYNQP (77 aa). A helical membrane pass occupies residues 307 to 333; sequence VFLAGMGLAFLYMTVLGFDCITTGYAY. Cys-326 contributes to the Fe cation binding site. Residues 334 to 338 lie on the Extracellular side of the membrane; sequence TQGLS. The chain crosses the membrane as a helical span at residues 339–366; the sequence is GSILSILMGASAITGIMGTVAFTWLRRK. Residues 367 to 368 are Cytoplasmic-facing; the sequence is CG. A helical membrane pass occupies residues 369-391; sequence LVRTGLISGLAQLSCLILCVISV. At 392-453 the chain is on the extracellular side; that stretch reads FMPGSPLDLS…ETSPESVPII (62 aa). N-linked (GlcNAc...) asparagine glycosylation is present at Asn-434. The helical transmembrane segment at 454–483 threads the bilayer; it reads SVSLLFAGVIAARIGLWSFDLTVTQLLQEN. Residues 484–488 are Cytoplasmic-facing; that stretch reads VIESE. The chain crosses the membrane as a helical span at residues 489 to 513; sequence RGIINGVQNSMNYLLDLLHFIMVIL. His-507 contributes to the Fe cation binding site. The Extracellular portion of the chain corresponds to 514–516; the sequence is APN. The helical transmembrane segment at 517-542 threads the bilayer; sequence PEAFGLLVLISVSFVAMGHIMYFRFA. Residues 543-571 lie on the Cytoplasmic side of the membrane; sequence QNTLGNKLFACGPDAKEVRKENQANTSVV.

This sequence belongs to the ferroportin (FP) (TC 2.A.100) family. SLC40A subfamily. Identified in a complex with STOM. Interacts with HAMP; affinity of the peptide hormone HAMP for SLC40A1 increases by 80-fold in the presence of iron and the interaction promotes SLC40A1 ubiquitination and degradation. Part of a complex composed of SLC40A1/ferroportin, TF/transferrin and HEPH/hephaestin that transfers iron from cells to transferrin. Post-translationally, polyubiquitinated by RNF217; leading to proteasomal degradation. Under conditions of high systemic iron levels, both the hormone peptide hepcidin/HAMP and holo(iron bound)-transferrin/TF induce the ubiquitination, internalization and proteasomal degradation of SLC40A1 to control iron release from cells. Detected in erythrocytes (at protein level). Expressed in placenta, intestine, muscle and spleen. Highly expressed in mature red blood.

It localises to the cell membrane. The protein localises to the basolateral cell membrane. The enzyme catalyses Fe(2+)(in) = Fe(2+)(out). Transports Fe(2+) from the inside of a cell to the outside of the cell, playing a key role for maintaining systemic iron homeostasis. Transports iron from intestinal, splenic, hepatic cells, macrophages and erythrocytes into the blood to provide iron to other tissues. Controls therefore dietary iron uptake, iron recycling by macrophages and erythrocytes, and release of iron stores in hepatocytes. When iron is in excess in serum, circulating HAMP/hepcidin levels increase resulting in a degradation of SLC40A1, thus limiting the iron efflux to plasma. In Homo sapiens (Human), this protein is Ferroportin.